Consider the following 68-residue polypeptide: Conotoxin PnMLKM-011 (68 aa).

The signal sequence occupies residues 1 to 17 (MGVVLFIFLVLFPLATL). A propeptide spanning residues 18-51 (QLDPDQPVERYAENKQLLNPDERRGIILHALGQR) is cleaved from the precursor. Intrachain disulfides connect cysteine 53-cysteine 65, cysteine 54-cysteine 63, and cysteine 59-cysteine 66. Leucine amide is present on leucine 67.

The protein belongs to the conotoxin M superfamily. In terms of tissue distribution, expressed by the venom duct.

It is found in the secreted. The sequence is that of Conotoxin PnMLKM-011 from Conus pennaceus (Feathered cone).